A 176-amino-acid chain; its full sequence is DELTA-stichotoxin-She4a (176 aa).

The plays an important role in the hemolytic activity stretch occupies residues 2–11 (ELAGTIIDGA). The segment at 10–29 (GASLTFEVLDKVLGELGKVS) is N-terminal region. Positions 53, 86, 104, 106, 132, 136, and 137 each coordinate phosphocholine. Residues 104-119 (SVPFDYNWYSNWWDVK) form a trp-rich region, which is important for the binding to lipid membrane region. Positions 142–144 (RGD) match the Cell attachment site motif.

In terms of assembly, octamer or nonamer in membranes. Monomer in the soluble state.

Its subcellular location is the secreted. The protein resides in the nematocyst. It is found in the target cell membrane. Pore-forming protein that forms cations-selective hydrophilic pores of around 1 nm and causes cardiac stimulation and cytolysis. Pore formation is a multi-step process that involves specific recognition of membrane sphingomyelin (but neither cholesterol nor phosphatidylcholine) using aromatic rich region and adjacent phosphocholine (POC) binding site, firm binding to the membrane (mainly driven by hydrophobic interactions) accompanied by the transfer of the N-terminal region to the lipid-water interface and finally pore formation after oligomerization of monomers. Cytolytic effects include red blood cells hemolysis, platelet aggregation and lysis, cytotoxic and cytostatic effects on fibroblasts. Lethality in mammals has been ascribed to severe vasospasm of coronary vessels, cardiac arrhythmia, and inotropic effects. This is DELTA-stichotoxin-She4a from Stichodactyla helianthus (Sun anemone).